Reading from the N-terminus, the 355-residue chain is Protein AMBP (355 aa).

3-hydroxy-L-kynurenine is bound by residues Cys55 and Lys138. A disulfide bridge connects residues Cys92 and Cys189. N-linked (GlcNAc...) asparagine glycosylation is present at Asn145. Residue Lys150 participates in 3-hydroxy-L-kynurenine binding. Residues Asn231 and Asn255 are each glycosylated (N-linked (GlcNAc...) asparagine). Cystine bridges form between Cys236–Cys286, Cys245–Cys269, Cys261–Cys282, Cys292–Cys342, Cys301–Cys325, and Cys317–Cys338. 2 consecutive BPTI/Kunitz inhibitor domains span residues 236–286 (CKAA…LQRC) and 292–342 (CRLP…QEYC).

This sequence in the N-terminal section; belongs to the calycin superfamily. Lipocalin family. As to quaternary structure, I-alpha-I plasma protease inhibitors are assembled from one or two heavy chains (H1, H2 or H3) and one light chain, bikunin. Inter-alpha-inhibitor (I-alpha-I) is composed of H1, H2 and bikunin, inter-alpha-like inhibitor (I-alpha-LI) of H2 and bikunin, and pre-alpha-inhibitor (P-alpha-I) of H3 and bikunin. In terms of processing, the precursor is proteolytically processed into two separately functioning proteins. Post-translationally, 3-hydroxykynurenine, an oxidized tryptophan metabolite that is common in biological fluids, reacts with Cys-55, Lys-138, and Lys-150 to form heterogeneous polycyclic chromophores including hydroxanthommatin. The reaction by alpha-1-microglobulin is autocatalytic. The chromophore can react with accessible cysteines forming non-reducible thioether cross-links with other molecules of alpha-1-microglobulin or with other proteins. Expressed by the liver and secreted in plasma.

The protein resides in the secreted. In Pleuronectes platessa (European plaice), this protein is Protein AMBP.